A 353-amino-acid chain; its full sequence is UPF0283 membrane protein YcjF (353 aa).

Basic and acidic residues predominate over residues Met-1–Pro-19. Residues Met-1–Arg-35 form a disordered region. Over Met-1–Lys-69 the chain is Periplasmic. A helical transmembrane segment spans residues Met-70–Thr-90. At Met-91 to Trp-99 the chain is on the cytoplasmic side. A helical transmembrane segment spans residues Val-100–Val-120. The Periplasmic portion of the chain corresponds to Thr-121–Ala-212. A helical transmembrane segment spans residues Glu-213–Trp-233. At Arg-234–Lys-353 the chain is on the cytoplasmic side.

This sequence belongs to the UPF0283 family.

Its subcellular location is the cell inner membrane. The sequence is that of UPF0283 membrane protein YcjF (ycjF) from Salmonella typhimurium (strain LT2 / SGSC1412 / ATCC 700720).